Consider the following 156-residue polypeptide: Ecotin (156 aa).

An N-terminal signal peptide occupies residues 1–19; that stretch reads MKALLIAAGVAALSSTAMA. Cys65 and Cys102 are joined by a disulfide.

Belongs to the protease inhibitor I11 (ecotin) family. As to quaternary structure, homodimer.

It is found in the periplasm. General inhibitor of family S1 serine proteases. The sequence is that of Ecotin from Pseudomonas aeruginosa (strain UCBPP-PA14).